We begin with the raw amino-acid sequence, 78 residues long: MPKIYRVVGDTSTGMKFVVEVVGERPYDALEKVYSVLGSRHKLKRTQIRIREVSVVEPSSAKSNEAKMLMVLEKVVRY.

The protein belongs to the eukaryotic ribosomal protein eL20 family. Part of the 50S ribosomal subunit. Binds 23S rRNA.

The polypeptide is Large ribosomal subunit protein eL20 (Pyrobaculum calidifontis (strain DSM 21063 / JCM 11548 / VA1)).